A 90-amino-acid chain; its full sequence is Putative membrane protein insertion efficiency factor (90 aa).

Residues 68–90 (VPAHFSLRRNPQYKEEDHRGKKR) form a disordered region. The segment covering 79–90 (QYKEEDHRGKKR) has biased composition (basic and acidic residues).

This sequence belongs to the UPF0161 family.

It localises to the cell membrane. Functionally, could be involved in insertion of integral membrane proteins into the membrane. This is Putative membrane protein insertion efficiency factor from Lactiplantibacillus plantarum (strain ATCC BAA-793 / NCIMB 8826 / WCFS1) (Lactobacillus plantarum).